A 226-amino-acid polypeptide reads, in one-letter code: PKHD-type hydroxylase Bind_0236 (226 aa).

The 101-residue stretch at 78–178 (TIFPPLFNRY…RIASFFWIQS (101 aa)) folds into the Fe2OG dioxygenase domain. 3 residues coordinate Fe cation: His96, Asp98, and His159. Arg169 contacts 2-oxoglutarate.

Fe(2+) serves as cofactor. It depends on L-ascorbate as a cofactor.

In Beijerinckia indica subsp. indica (strain ATCC 9039 / DSM 1715 / NCIMB 8712), this protein is PKHD-type hydroxylase Bind_0236.